A 362-amino-acid chain; its full sequence is MLSAGIVGLPNVGKSTLFSAITNLQVEIANYPFATIEPNAGIVNVIDERLDKLASLIKPDKVTHTTFRFVDIAGLVKGASKGEGLGNQFLANIREVDLICHVVRCYEDKKIVHVNNQVDPVFDFEIIVNELIQADIEVVNTRIGKIKRKAESGDKQSKEEYQLLAPVLQGLQQNQMVLHLVNEVDLKKLKSLNLLTAKPILVVANVSEADLSNLDHNPHLTQLNQFLKQHNLPHAIPVCALLENELSSLDANGRQDWLKELGLSDYQGLNQLIKTAYDAIGLWSFFTFGKQEVRAWAFKKGWLAPQCAGEIHTDFERGFIKVEVISWNQLYELKSLQEAKKQGLVRLRGQGLRDARWWCVSL.

The OBG-type G domain occupies 2 to 258 (LSAGIVGLPN…LDANGRQDWL (257 aa)). Position 11–16 (11–16 (NVGKST)) interacts with ATP. The Mg(2+) site is built by serine 15 and threonine 35. Positions 281 to 347 (GLWSFFTFGK…EAKKQGLVRL (67 aa)) constitute a TGS domain.

It belongs to the TRAFAC class OBG-HflX-like GTPase superfamily. OBG GTPase family. YchF/OLA1 subfamily. It depends on Mg(2+) as a cofactor.

Its function is as follows. ATPase that binds to both the 70S ribosome and the 50S ribosomal subunit in a nucleotide-independent manner. The sequence is that of Ribosome-binding ATPase YchF from Mycoplasma pneumoniae (strain ATCC 29342 / M129 / Subtype 1) (Mycoplasmoides pneumoniae).